A 76-amino-acid polypeptide reads, in one-letter code: Tautomerase PptA (76 aa).

Proline 2 serves as the catalytic Proton acceptor; via imino nitrogen.

It belongs to the 4-oxalocrotonate tautomerase family. PptA subfamily. Homodimer.

It localises to the cytoplasm. This is Tautomerase PptA from Cronobacter sakazakii (strain ATCC BAA-894) (Enterobacter sakazakii).